The primary structure comprises 222 residues: Pleckstrin homology domain-containing family B member 2 (222 aa).

The region spanning 2 to 109 (AFVKSGWLLR…WKFTLQDSRT (108 aa)) is the PH domain. Lysine 20 is an a 1,2-diacyl-sn-glycero-3-phospho-L-serine binding site.

The protein resides in the recycling endosome membrane. In terms of biological role, involved in retrograde transport of recycling endosomes. The polypeptide is Pleckstrin homology domain-containing family B member 2 (PLEKHB2) (Homo sapiens (Human)).